A 653-amino-acid chain; its full sequence is DNA ligase (653 aa).

NAD(+) contacts are provided by residues 32–36 (NFEYD) and 80–81 (SL). The active-site N6-AMP-lysine intermediate is Lys104. Residues Arg125, Glu159, and Lys297 each contribute to the NAD(+) site. Residues Cys386, Cys389, Cys406, and Cys411 each coordinate Zn(2+). The 83-residue stretch at 571-653 (GGSEKLKGLT…EEFIQLLNEA (83 aa)) folds into the BRCT domain.

Belongs to the NAD-dependent DNA ligase family. LigA subfamily. Mg(2+) serves as cofactor. It depends on Mn(2+) as a cofactor.

It carries out the reaction NAD(+) + (deoxyribonucleotide)n-3'-hydroxyl + 5'-phospho-(deoxyribonucleotide)m = (deoxyribonucleotide)n+m + AMP + beta-nicotinamide D-nucleotide.. DNA ligase that catalyzes the formation of phosphodiester linkages between 5'-phosphoryl and 3'-hydroxyl groups in double-stranded DNA using NAD as a coenzyme and as the energy source for the reaction. It is essential for DNA replication and repair of damaged DNA. The chain is DNA ligase from Lachnoclostridium phytofermentans (strain ATCC 700394 / DSM 18823 / ISDg) (Clostridium phytofermentans).